Here is a 238-residue protein sequence, read N- to C-terminus: MRPSGRTAQQVRPITITRHFTAHAEGSVLVEFGNTKVICTASVEENVPRWLKGKGKGWVTAEYGMLPRATHTRNNREAASGKQGGRTMEIQRLIARSLRAAVDLEALGEQMITVDCDVIQADGGTRTASITGASVALADAINHMIASGKLKKNPMKGHVAAVSVGIYKGEAICDLEYLEDSAADTDMNVVMMEDGKMIEVQGTAEVAPFSHQELLDMLALAQQGINDIIEKQKAALAE.

Phosphate-binding positions include R86 and 124–126 (GTR).

This sequence belongs to the RNase PH family. In terms of assembly, homohexameric ring arranged as a trimer of dimers.

It carries out the reaction tRNA(n+1) + phosphate = tRNA(n) + a ribonucleoside 5'-diphosphate. In terms of biological role, phosphorolytic 3'-5' exoribonuclease that plays an important role in tRNA 3'-end maturation. Removes nucleotide residues following the 3'-CCA terminus of tRNAs; can also add nucleotides to the ends of RNA molecules by using nucleoside diphosphates as substrates, but this may not be physiologically important. Probably plays a role in initiation of 16S rRNA degradation (leading to ribosome degradation) during starvation. In Aliivibrio salmonicida (strain LFI1238) (Vibrio salmonicida (strain LFI1238)), this protein is Ribonuclease PH.